Consider the following 281-residue polypeptide: ATP phosphoribosyltransferase (281 aa).

The protein belongs to the ATP phosphoribosyltransferase family. Long subfamily. As to quaternary structure, equilibrium between an active dimeric form, an inactive hexameric form and higher aggregates. Interconversion between the various forms is largely reversible and is influenced by the natural substrates and inhibitors of the enzyme. Mg(2+) is required as a cofactor.

The protein resides in the cytoplasm. It catalyses the reaction 1-(5-phospho-beta-D-ribosyl)-ATP + diphosphate = 5-phospho-alpha-D-ribose 1-diphosphate + ATP. It participates in amino-acid biosynthesis; L-histidine biosynthesis; L-histidine from 5-phospho-alpha-D-ribose 1-diphosphate: step 1/9. Its activity is regulated as follows. Feedback inhibited by histidine. Functionally, catalyzes the condensation of ATP and 5-phosphoribose 1-diphosphate to form N'-(5'-phosphoribosyl)-ATP (PR-ATP). Has a crucial role in the pathway because the rate of histidine biosynthesis seems to be controlled primarily by regulation of HisG enzymatic activity. The protein is ATP phosphoribosyltransferase of Mycolicibacterium gilvum (strain PYR-GCK) (Mycobacterium gilvum (strain PYR-GCK)).